A 696-amino-acid polypeptide reads, in one-letter code: Methionine synthase reductase (696 aa).

The region spanning 4–147 (FLLLYATQRG…VVEPWIDGLW (144 aa)) is the Flavodoxin-like domain. Residues 10–14 (TQRGQ) and 93–124 (LLGLGDSEYTYFCNGGKVIDKRLQELGAQRFY) each bind FMN. Positions 166–245 (TLSRASDAPL…SSLSIPAVPP (80 aa)) are hinge. Phosphoserine occurs at positions 171 and 188. The FAD-binding FR-type domain maps to 269–531 (DPSFQVPISK…PRATNAFHLP (263 aa)). Lysine 289 contacts NADP(+). FAD-binding positions include 449–452 (RPYS) and 485–488 (GVCT). Residues 608–609 (SR), 622–624 (YVQ), and aspartate 657 contribute to the NADP(+) site. Position 695 (tryptophan 695) interacts with FAD.

In terms of assembly, forms a multiprotein complex with MMACHC, MMADHC and MTR. FAD is required as a cofactor. It depends on FMN as a cofactor.

The protein resides in the cytoplasm. It carries out the reaction 2 methylcob(III)alamin-[methionine synthase] + 2 S-adenosyl-L-homocysteine + NADP(+) + H(+) = 2 cob(II)alamin-[methionine synthase] + 2 S-adenosyl-L-methionine + NADPH. The catalysed reaction is 2 cob(II)alamin + A + 2 H2O + 2 H(+) = 2 aquacob(III)alamin + AH2. Functionally, key enzyme in methionine and folate homeostasis responsible for the reactivation of methionine synthase (MTR/MS) activity by catalyzing the reductive methylation of MTR-bound cob(II)alamin. Cobalamin (vitamin B12) forms a complex with MTR to serve as an intermediary in methyl transfer reactions that cycles between MTR-bound methylcob(III)alamin and MTR bound-cob(I)alamin forms, and occasional oxidative escape of the cob(I)alamin intermediate during the catalytic cycle leads to the inactive cob(II)alamin species. The processing of cobalamin in the cytosol occurs in a multiprotein complex composed of at least MMACHC, MMADHC, MTRR and MTR which may contribute to shuttle safely and efficiently cobalamin towards MTR in order to produce methionine. Also necessary for the utilization of methyl groups from the folate cycle, thereby affecting transgenerational epigenetic inheritance. Also acts as a molecular chaperone for methionine synthase by stabilizing apoMTR and incorporating methylcob(III)alamin into apoMTR to form the holoenzyme. Also serves as an aquacob(III)alamin reductase by reducing aquacob(III)alamin to cob(II)alamin; this reduction leads to stimulation of the conversion of apoMTR and aquacob(III)alamin to MTR holoenzyme. The protein is Methionine synthase reductase of Mus musculus (Mouse).